The primary structure comprises 372 residues: Glutamate 5-kinase (372 aa).

An ATP-binding site is contributed by Lys14. Ser54, Asp141, and Asn153 together coordinate substrate. 173 to 174 provides a ligand contact to ATP; that stretch reads TD. Residues 280–358 enclose the PUA domain; that stretch reads RGHVVIDAGA…GEIEIVLGYM (79 aa).

It belongs to the glutamate 5-kinase family.

Its subcellular location is the cytoplasm. The enzyme catalyses L-glutamate + ATP = L-glutamyl 5-phosphate + ADP. It participates in amino-acid biosynthesis; L-proline biosynthesis; L-glutamate 5-semialdehyde from L-glutamate: step 1/2. Its function is as follows. Catalyzes the transfer of a phosphate group to glutamate to form L-glutamate 5-phosphate. The sequence is that of Glutamate 5-kinase from Burkholderia orbicola (strain MC0-3).